Reading from the N-terminus, the 275-residue chain is MIQFTKMHGLGNDFMVVDGITQNVFFSPEQIRRLADRNFGVGFDQLLLVEPPYDPDLDFHYRIFNADGGEVENCGNGARCFARFVRNKGLTNKNKIRVSTSAGKMTLRLERDGTVTVNMGVPVLEPSQIPFKAKKAEKTYLLQTPQQTFLCGAASMGNPHCVLDVEDVANANVAEIGALLTKHERFPRGVNVGFMQVVNAGHIKLRVYERGAAETLACGTGACAAVVVGQIQGKLDQQVQVDLPGGSLTINWEGEGKPLWMTGPAQHVYDGQIQL.

3 residues coordinate substrate: Asn12, Gln45, and Asn65. Cys74 acts as the Proton donor in catalysis. Residues 75–76 (GN), Asn158, Asn191, and 209–210 (ER) contribute to the substrate site. The active-site Proton acceptor is Cys218. 219–220 (GT) provides a ligand contact to substrate.

This sequence belongs to the diaminopimelate epimerase family. In terms of assembly, homodimer.

It localises to the cytoplasm. It catalyses the reaction (2S,6S)-2,6-diaminopimelate = meso-2,6-diaminopimelate. Its pathway is amino-acid biosynthesis; L-lysine biosynthesis via DAP pathway; DL-2,6-diaminopimelate from LL-2,6-diaminopimelate: step 1/1. Its function is as follows. Catalyzes the stereoinversion of LL-2,6-diaminopimelate (L,L-DAP) to meso-diaminopimelate (meso-DAP), a precursor of L-lysine and an essential component of the bacterial peptidoglycan. The sequence is that of Diaminopimelate epimerase from Shewanella oneidensis (strain ATCC 700550 / JCM 31522 / CIP 106686 / LMG 19005 / NCIMB 14063 / MR-1).